Here is a 144-residue protein sequence, read N- to C-terminus: Large ribosomal subunit protein uL15 (144 aa).

The tract at residues 1 to 57 (MRLNTLSPAPGSKPSAKRVGRGIGSGLGKTCGRGHKGQKSRSGGSVRPGFEGGQMPL) is disordered. Residues 21 to 31 (RGIGSGLGKTC) are compositionally biased toward gly residues.

It belongs to the universal ribosomal protein uL15 family. In terms of assembly, part of the 50S ribosomal subunit.

Its function is as follows. Binds to the 23S rRNA. The protein is Large ribosomal subunit protein uL15 of Photobacterium profundum (strain SS9).